Reading from the N-terminus, the 335-residue chain is Acetyl-coenzyme A carboxylase carboxyl transferase subunit alpha (335 aa).

The 261-residue stretch at 48 to 308 folds into the CoA carboxyltransferase C-terminal domain; that stretch reads VLESKVDALR…KSLLVEELRM (261 aa).

The protein belongs to the AccA family. Acetyl-CoA carboxylase is a heterohexamer composed of biotin carboxyl carrier protein (AccB), biotin carboxylase (AccC) and two subunits each of ACCase subunit alpha (AccA) and ACCase subunit beta (AccD).

It localises to the cytoplasm. It catalyses the reaction N(6)-carboxybiotinyl-L-lysyl-[protein] + acetyl-CoA = N(6)-biotinyl-L-lysyl-[protein] + malonyl-CoA. It participates in lipid metabolism; malonyl-CoA biosynthesis; malonyl-CoA from acetyl-CoA: step 1/1. Component of the acetyl coenzyme A carboxylase (ACC) complex. First, biotin carboxylase catalyzes the carboxylation of biotin on its carrier protein (BCCP) and then the CO(2) group is transferred by the carboxyltransferase to acetyl-CoA to form malonyl-CoA. The sequence is that of Acetyl-coenzyme A carboxylase carboxyl transferase subunit alpha from Chlorobium phaeobacteroides (strain BS1).